Consider the following 172-residue polypeptide: Signal peptidase complex catalytic subunit SEC11 (172 aa).

Residues 1–14 lie on the Cytoplasmic side of the membrane; the sequence is MLSSLGNPRQAATQ. A helical; Signal-anchor for type II membrane protein transmembrane segment spans residues 15 to 35; sequence LLNFALILSTAFMMWKGLSVA. Residues 36–172 are Lumenal-facing; sequence TDSPSPIVVV…MGLMVVLQRE (137 aa). Active-site charge relay system residues include Ser-49, His-90, and Asp-115. The interval 158–169 is C-terminal short (CTS) helix; it reads AMLGIMGLMVVL.

Belongs to the peptidase S26B family. In terms of assembly, component of the signal peptidase complex (SPC) composed of a catalytic subunit SEC11 and three accessory subunits SPC1, SPC2 and SPC3. The complex induces a local thinning of the ER membrane which is used to measure the length of the signal peptide (SP) h-region of protein substrates. This ensures the selectivity of the complex towards h-regions shorter than 18-20 amino acids. SPC associates with the translocon complex.

The protein localises to the endoplasmic reticulum membrane. The enzyme catalyses Cleavage of hydrophobic, N-terminal signal or leader sequences from secreted and periplasmic proteins.. In terms of biological role, catalytic component of the signal peptidase complex (SPC) which catalyzes the cleavage of N-terminal signal sequences from nascent proteins as they are translocated into the lumen of the endoplasmic reticulum. Specifically cleaves N-terminal signal peptides that contain a hydrophobic alpha-helix (h-region) shorter than 18-20 amino acids. The chain is Signal peptidase complex catalytic subunit SEC11 (SEC11) from Pyricularia oryzae (strain 70-15 / ATCC MYA-4617 / FGSC 8958) (Rice blast fungus).